The chain runs to 207 residues: Phenazine biosynthesis protein PhzD1 (207 aa).

Aspartate 38 serves as the catalytic Proton donor. Residues glutamine 78, arginine 87, lysine 122, and 151–155 (YAHVG) contribute to the substrate site.

The protein belongs to the isochorismatase family. In terms of assembly, homodimer.

The catalysed reaction is (2S)-2-amino-4-deoxychorismate + H2O = (5S,6S)-6-amino-5-hydroxycyclohexa-1,3-diene-1-carboxyate + pyruvate. It functions in the pathway antibiotic biosynthesis; phenazine biosynthesis. Involved in the biosynthesis of the antibiotic phenazine, a nitrogen-containing heterocyclic molecule. PhzD1 (operon phzA1B1C1E1F1G1) has a role in the biosynthesis of the phenazine during planktonic growth. Catalyzes the hydrolysis of the vinyl ether functional group of 2-amino-2-deoxyisochorismate (ADIC), yielding pyruvate and trans-2,3-dihydro-3-hydroxyanthranilic acid (DHHA). Also able to act on isochorismate, chorismate and 4-amino-4-deoxychorismate (ADC) as substrates. The polypeptide is Phenazine biosynthesis protein PhzD1 (Pseudomonas aeruginosa (strain ATCC 15692 / DSM 22644 / CIP 104116 / JCM 14847 / LMG 12228 / 1C / PRS 101 / PAO1)).